Here is a 593-residue protein sequence, read N- to C-terminus: Auxin response factor 12 (593 aa).

Positions 126 to 228 form a DNA-binding region, TF-B3; that stretch reads FTKVLTASDT…ELRVGIRRAR (103 aa). The PB1 domain occupies 511–592; that stretch reads RTCTKVQMQG…MVKKIFIQKR (82 aa).

It belongs to the ARF family. In terms of assembly, homodimers and heterodimers.

The protein localises to the nucleus. Auxin response factors (ARFs) are transcriptional factors that bind specifically to the DNA sequence 5'-TGTCTC-3' found in the auxin-responsive promoter elements (AuxREs). Could act as transcriptional activator or repressor. Formation of heterodimers with Aux/IAA proteins may alter their ability to modulate early auxin response genes expression. This is Auxin response factor 12 (ARF12) from Arabidopsis thaliana (Mouse-ear cress).